Reading from the N-terminus, the 374-residue chain is MTPTAQTTASARRVVFPFTAIVGQEEMKLALLLNVIDPKIGGVMIMGDRGTGKSTTIRALADLLPEIPVVANDPFNSDPSDPDLMSDEVRQKSGTGAEIPIEFKKVQMVDLPLGATEDRVCGTIDIEKALSEGVKAFEPGLLAKANRGILYVDEVNLLDDHLVDVLLDSAASGWNTVEREGISIRHPARFVLVGSGNPEEGELRPQLLDRFGMHAEIHTVKEPALRVQIVEQRSEFDQNPPTFLEKYNPEQTALQKKIVEAQKLLPEVKLDYDLRVKISEVCSELDVDGLRGDIVTNRAAKALTAYEGRTEVTVDDIRRVITLCLRHRLRKDPLESIDSGYKVEKVFARIFGVELLEDDSSQKNGAGQIKTGVR.

Gly-47–Ser-54 provides a ligand contact to ATP.

This sequence belongs to the Mg-chelatase subunits D/I family.

The enzyme catalyses protoporphyrin IX + Mg(2+) + ATP + H2O = Mg-protoporphyrin IX + ADP + phosphate + 3 H(+). Its pathway is porphyrin-containing compound metabolism; chlorophyll biosynthesis. Functionally, involved in chlorophyll biosynthesis; introduces a magnesium ion into protoporphyrin IX to yield Mg-protoporphyrin IX. The protein is Magnesium-chelatase subunit ChlI (chlI) of Nostoc sp. (strain PCC 7120 / SAG 25.82 / UTEX 2576).